The following is a 143-amino-acid chain: Transcriptional regulator SlyA (143 aa).

The HTH marR-type domain maps to 2–135; it reads ESTLGSDLAR…LSGLIDKLEK (134 aa). Positions 49–72 form a DNA-binding region, H-T-H motif; the sequence is QIQLAKAIGIEQPSLVRTLDQLEE.

It belongs to the SlyA family. As to quaternary structure, homodimer.

In terms of biological role, transcription regulator that can specifically activate or repress expression of target genes. The sequence is that of Transcriptional regulator SlyA from Yersinia pestis (strain Pestoides F).